A 552-amino-acid polypeptide reads, in one-letter code: Urocanate hydratase (552 aa).

NAD(+)-binding positions include 49-50 (GG), Q127, 173-175 (GMG), D193, 239-240 (NA), 260-264 (QTSAH), 270-271 (YI), and Y319. The active site involves C407. Residue G489 coordinates NAD(+).

Belongs to the urocanase family. Requires NAD(+) as cofactor.

Its subcellular location is the cytoplasm. It catalyses the reaction 4-imidazolone-5-propanoate = trans-urocanate + H2O. The protein operates within amino-acid degradation; L-histidine degradation into L-glutamate; N-formimidoyl-L-glutamate from L-histidine: step 2/3. Catalyzes the conversion of urocanate to 4-imidazolone-5-propionate. The sequence is that of Urocanate hydratase from Bacillus thuringiensis (strain Al Hakam).